A 486-amino-acid chain; its full sequence is Heme A synthase COX15 (486 aa).

The N-terminal 33 residues, 1 to 33, are a transit peptide targeting the mitochondrion; that stretch reads MLFRNIEVGRQAAKLLTRTSSRLAWQSIGASRN. Over 34–85 the chain is Mitochondrial matrix; sequence ISTIRQQIRKTQLYNFKKTVSIRPFSLSSPVFKPHVASESNPIESRLKTSKN. The chain crosses the membrane as a helical span at residues 86–106; it reads VAYWLIGTSGLVFGIVVLGGL. The Mitochondrial intermembrane portion of the chain corresponds to 107-170; it reads TRLTESGLSI…FIFFMEWIHR (64 aa). His-169 serves as a coordination point for heme o. The chain crosses the membrane as a helical span at residues 171-191; that stretch reads LWGRAIGAVFILPAVYFAVSK. Residues 192–200 are Mitochondrial matrix-facing; the sequence is KTSGHVNKR. Residues 201 to 221 traverse the membrane as a helical segment; the sequence is LFGLAGLLGLQGFVGWWMVKS. The Mitochondrial intermembrane portion of the chain corresponds to 222 to 243; sequence GLDQEQLDARKSKPTVSQYRLT. Residues 244-264 traverse the membrane as a helical segment; that stretch reads THLGTAFFLYMGMLWTGLEIL. His-245 contacts heme o. Over 265–293 the chain is Mitochondrial matrix; that stretch reads RECKWIKNPVQAISLFKKLDNPAIGPMRK. Residues 294-314 traverse the membrane as a helical segment; the sequence is ISLALLAVSFLTAMSGGMVAG. Topologically, residues 315–364 are mitochondrial intermembrane; the sequence is LDAGWVYNTWPKMGERWFPSSRELMDENFCRREDKKDLWWRNLLENPVTV. Residues 365–387 form a helical membrane-spanning segment; that stretch reads QLVHRTCAYVAFTSVLAAHMYAI. His-368 contributes to the heme b binding site. Residues 388 to 402 are Mitochondrial matrix-facing; that stretch reads KKKAVIPRNAMTSLH. Residues 403–423 form a helical membrane-spanning segment; it reads VMMGVVTLQATLGILTILYLV. Position 424 (Pro-424) is a topological domain, mitochondrial intermembrane. Residues 425–445 traverse the membrane as a helical segment; that stretch reads ISLASIHQAGALALLTSSLVF. A heme b-binding site is contributed by His-431. The Mitochondrial matrix portion of the chain corresponds to 446–486; it reads ASQLRKPRAPMRNVIITLPHSSKVTSGKILSEASKLASKPL.

Belongs to the COX15/CtaA family. Type 2 subfamily. Forms 200-350 kDa oligomeric complexes independent on heme binding. In addition to form homooligomeric complexes, a portion also associates with the mitochondrial respiratory supercomplexes. Interacts with CcO assembly factors PET117, SHY1, COA3 and COA1, CcO subunit COX13 and cytochrome b-c1 subunit COR1. Heme b serves as cofactor.

It is found in the mitochondrion inner membrane. The enzyme catalyses Fe(II)-heme o + 2 A + H2O = Fe(II)-heme a + 2 AH2. The protein operates within porphyrin-containing compound metabolism; heme A biosynthesis; heme A from heme O: step 1/1. In terms of biological role, catalyzes the second reaction in the biosynthesis of heme A, a prosthetic group of mitochondrial cytochrome c oxidase (CcO). Heme A is synthesized from heme B by two sequential enzymatic reactions catalyzed by heme O synthase (HOS/COX10) and heme A synthase (HAS/COX15). HAS catalyzes the conversion of heme O to heme A by two successive hydroxylations of the methyl group at C8, in a reaction that involves matrix ferredoxin YAH1 and ferredoxin reductase ARH1. The first hydroxylation forms heme I, the second hydroxylation results in an unstable dihydroxymethyl group, which spontaneously dehydrates, resulting in the formyl group of heme A. May also play a secondary role in CcO assembly. Plays a role in the maturation of COX1, the heme A-containing structural CcO subunit, possibly by interacting with the COX1-containing sub-assembly complexes that form prior to heme A insertion. May also positively regulate the upstream enzymatic reaction, farnesylation of heme B by HOS/COX10. This chain is Heme A synthase COX15, found in Saccharomyces cerevisiae (strain ATCC 204508 / S288c) (Baker's yeast).